A 241-amino-acid polypeptide reads, in one-letter code: Triosephosphate isomerase (241 aa).

A substrate-binding site is contributed by 9 to 11 (NWK). His96 functions as the Electrophile in the catalytic mechanism. The Proton acceptor role is filled by Glu165. Residues Gly171, Ser204, and 225–226 (GG) contribute to the substrate site.

Belongs to the triosephosphate isomerase family. As to quaternary structure, homodimer.

It localises to the cytoplasm. The enzyme catalyses D-glyceraldehyde 3-phosphate = dihydroxyacetone phosphate. It participates in carbohydrate biosynthesis; gluconeogenesis. Its pathway is carbohydrate degradation; glycolysis; D-glyceraldehyde 3-phosphate from glycerone phosphate: step 1/1. Functionally, involved in the gluconeogenesis. Catalyzes stereospecifically the conversion of dihydroxyacetone phosphate (DHAP) to D-glyceraldehyde-3-phosphate (G3P). The chain is Triosephosphate isomerase from Acaryochloris marina (strain MBIC 11017).